Consider the following 367-residue polypeptide: MSSSQTLVVKLGTSVLTGGSRRLDQSHIVELVRQCAKQHEKGHRIIIVTSGAIAAGREYLNYPDLPATIASKQLLAAVGQSALIQVWKQLFAIYGIHIGQMLLTRADIEDRERFLNARDTLHALLDNKIIPVINENDAVATAEIKVGDNDNLSALAAILGGADKLLLLTDIEGLYTADPRSNPDAKLIPEVFDINDELRQMAGDSVSGLGTGGMATKLQAATVAGRAGIDVVIAAGVKPDVISKVIDNEPVGTLFHGLKSPLETRKRWIFGAPVAGVIIVDNGAEKAIKEQGSSLLPKGIKEIKGDFSRGCVIRIQSLQGKDLAHGVAHYNSDALRLIAGHHSQEISQILGYEYGSVAVHRDDMIVS.

Lysine 10 contributes to the ATP binding site. The substrate site is built by serine 50, aspartate 137, and asparagine 149. ATP-binding positions include 169 to 170 and 211 to 217; these read TD and TGGMATK. Residues 275-353 enclose the PUA domain; sequence AGVIIVDNGA…QEISQILGYE (79 aa).

The protein belongs to the glutamate 5-kinase family.

Its subcellular location is the cytoplasm. It carries out the reaction L-glutamate + ATP = L-glutamyl 5-phosphate + ADP. It functions in the pathway amino-acid biosynthesis; L-proline biosynthesis; L-glutamate 5-semialdehyde from L-glutamate: step 1/2. Functionally, catalyzes the transfer of a phosphate group to glutamate to form L-glutamate 5-phosphate. The sequence is that of Glutamate 5-kinase from Proteus mirabilis (strain HI4320).